The sequence spans 151 residues: MVAERTFLAIKPDGVQRGLVGEILSRFERKGFKLIALKQLIPSRALAEQHYGVHRERPFFKGLVDFITSGPVIAMIWEGEGVILGARKLIGSTKPLDADPGTIRGDLAIDIGRNVIHGSDGPETASFEIGLWFESSELSDWNPSDQLWRVE.

ATP-binding residues include K11, F59, R87, T93, R104, and N114. H117 acts as the Pros-phosphohistidine intermediate in catalysis.

The protein belongs to the NDK family. Homotetramer. Mg(2+) is required as a cofactor.

Its subcellular location is the cytoplasm. It carries out the reaction a 2'-deoxyribonucleoside 5'-diphosphate + ATP = a 2'-deoxyribonucleoside 5'-triphosphate + ADP. The catalysed reaction is a ribonucleoside 5'-diphosphate + ATP = a ribonucleoside 5'-triphosphate + ADP. Major role in the synthesis of nucleoside triphosphates other than ATP. The ATP gamma phosphate is transferred to the NDP beta phosphate via a ping-pong mechanism, using a phosphorylated active-site intermediate. This Prochlorococcus marinus (strain MIT 9211) protein is Nucleoside diphosphate kinase.